A 224-amino-acid polypeptide reads, in one-letter code: Small ribosomal subunit protein uS2 (224 aa).

Positions 1 to 14 are enriched in basic and acidic residues; it reads MAEAKPAPEKEAAV. A disordered region spans residues 1-32; it reads MAEAKPAPEKEAAVKTESVPVADDEAASAKEG.

Belongs to the universal ribosomal protein uS2 family.

This chain is Small ribosomal subunit protein uS2, found in Methanosarcina mazei (strain ATCC BAA-159 / DSM 3647 / Goe1 / Go1 / JCM 11833 / OCM 88) (Methanosarcina frisia).